The chain runs to 357 residues: O-methyltransferase 9 (357 aa).

Residues Gly200, Asp224, Asn249, Phe250, and Lys263 each coordinate S-adenosyl-L-methionine. The active-site Proton acceptor is His267.

This sequence belongs to the class I-like SAM-binding methyltransferase superfamily. Cation-independent O-methyltransferase family. COMT subfamily.

It carries out the reaction (3,5-dichloro-2,4,6-trihydroxyphenyl)hexan-1-one + S-adenosyl-L-methionine = 1-(3,5-dichloro-2,6-dihydroxy-4-methoxyphenyl)hexan-1-one + S-adenosyl-L-homocysteine + H(+). In Dictyostelium discoideum (Social amoeba), this protein is O-methyltransferase 9 (omt9).